A 243-amino-acid polypeptide reads, in one-letter code: MLQNIRIVLVETSHTGNMGSVARAMKTMGLTNLWLVNPLVKPDSQAIALAAGASDVIGNAQIVDTLDDALAGCSLVVGTSARSRTLPWPMLDPRECGLKSVAEAVNTPVALVFGRERVGLTNDELQKCHYHVAIAANPEYSSLNLAMAVQVIAYEVRMAWLATQENDETAEHEETPYPLVDDLERFYGHLEQTLLSTGFIREGHPGQVMNKLRRLFTRARPESQELNILRGILASIEQQNKGK.

Residues 79–81 (TSA), Gly114, Ile134, and 141–143 (SSL) contribute to the S-adenosyl-L-methionine site.

It belongs to the class IV-like SAM-binding methyltransferase superfamily. RNA methyltransferase TrmH family. In terms of assembly, homodimer.

Its subcellular location is the cytoplasm. The enzyme catalyses cytidine(32) in tRNA + S-adenosyl-L-methionine = 2'-O-methylcytidine(32) in tRNA + S-adenosyl-L-homocysteine + H(+). It carries out the reaction uridine(32) in tRNA + S-adenosyl-L-methionine = 2'-O-methyluridine(32) in tRNA + S-adenosyl-L-homocysteine + H(+). Functionally, catalyzes the formation of 2'O-methylated cytidine (Cm32) or 2'O-methylated uridine (Um32) at position 32 in tRNA. The sequence is that of tRNA (cytidine/uridine-2'-O-)-methyltransferase TrmJ (trmJ) from Citrobacter koseri (strain ATCC BAA-895 / CDC 4225-83 / SGSC4696).